The chain runs to 709 residues: Protein white (709 aa).

Residues methionine 1–glutamate 35 form a disordered region. Polar residues predominate over residues lysine 15–glutamine 32. In terms of domain architecture, ABC transporter spans phenylalanine 103 to asparagine 348. ATP-binding positions include glycine 136–threonine 143 and glycine 292–threonine 299. Residues leucine 457 to valine 475 form a helical membrane-spanning segment. Residue asparagine 485 is glycosylated (N-linked (GlcNAc...) asparagine). The next 4 helical transmembrane spans lie at serine 487 to phenylalanine 507, leucine 537 to isoleucine 555, tyrosine 564 to isoleucine 585, and valine 598 to serine 616. Residue asparagine 658 is glycosylated (N-linked (GlcNAc...) asparagine). A helical membrane pass occupies residues leucine 681–cysteine 700.

The protein belongs to the ABC transporter superfamily. ABCG family. Eye pigment precursor importer (TC 3.A.1.204) subfamily.

The protein localises to the membrane. Functionally, may be part of a membrane-spanning permease system necessary for the transport of pigment precursors into pigment cells responsible for eye color. This Anopheles albimanus (New world malaria mosquito) protein is Protein white (W).